We begin with the raw amino-acid sequence, 489 residues long: Ammonium transporter Rh type C (489 aa).

At 1–21 the chain is on the cytoplasmic side; that stretch reads MGNCADCLRGFFCPPKNTNIR. Residues 22-42 traverse the membrane as a helical segment; sequence ISLPAVCFVWQIAMIVLFGVF. Topologically, residues 43-75 are extracellular; the sequence is IRYDAESDIRLWLQLKHTNNITSDIENDFYFRY. Asparagine 62 is a glycosylation site (N-linked (GlcNAc...) asparagine). A helical membrane pass occupies residues 76–96; it reads PSFQDVHVMIFVGFGFLMTFL. Topologically, residues 97–100 are cytoplasmic; sequence KRYS. Residues 101–121 traverse the membrane as a helical segment; that stretch reads FGGVGFNFLIGAFGLQWALLM. The Extracellular portion of the chain corresponds to 122–140; the sequence is QGWFHALDPTTGKISIGVE. Residues 141–161 traverse the membrane as a helical segment; it reads GLINADFCVAASLIAYGALLG. The Cytoplasmic portion of the chain corresponds to 162 to 169; that stretch reads KVSPVQLM. The helical transmembrane segment at 170-190 threads the bilayer; the sequence is VVTLFGVTLFAVEEYIILNLL. Over 191 to 195 the chain is Extracellular; it reads HCRDA. A helical transmembrane segment spans residues 196–216; sequence GGSMVIHCFGGYYGLTISWIL. At 217–235 the chain is on the cytoplasmic side; the sequence is YRPKLHQSKRLNGSVYHSD. A helical membrane pass occupies residues 236–256; that stretch reads VFAMIGTLFLWMFWPSFNSAI. At 257–266 the chain is on the extracellular side; that stretch reads TDHGSGQHRT. The chain crosses the membrane as a helical span at residues 267 to 287; sequence AINTYIALASSVLTTVAISSA. Over 288-298 the chain is Cytoplasmic; the sequence is SEKRGKLDMVH. Residues 299-319 traverse the membrane as a helical segment; it reads IQNATLAGGVAMGTAAEFMIT. Position 320 (proline 320) is a topological domain, extracellular. The helical transmembrane segment at 321 to 341 threads the bilayer; it reads YGALIVGFCTGIISTFGYLFV. Residues 342–359 lie on the Cytoplasmic side of the membrane; the sequence is SPFMEKYLKIQDTCGVHN. Residues 360 to 380 form a helical membrane-spanning segment; that stretch reads LHAMPGMLGGFIGAIVAAAAT. Residues 381-412 lie on the Extracellular side of the membrane; the sequence is EEVYSREGLIETFDFEGKFADRTVGTQGGFQA. Residues 413–433 traverse the membrane as a helical segment; that stretch reads AGVCVAIAFAVVGGAVVGLIL. The Cytoplasmic portion of the chain corresponds to 434-489; that stretch reads RLPIWGDPADDNCFDDEVYWEVPEDEEGILPVLEYNNHMTHKHQDISESNFSVEQS.

It belongs to the ammonium transporter (TC 2.A.49) family. Rh subfamily. As to quaternary structure, homotrimer.

It localises to the apical cell membrane. In terms of biological role, functions as an ammonia transporter. May play a role in the elimination of ammonia in the gill. In Gasterosteus aculeatus (Three-spined stickleback), this protein is Ammonium transporter Rh type C (rhcg).